The sequence spans 287 residues: Ribosomal RNA small subunit methyltransferase A (287 aa).

The S-adenosyl-L-methionine site is built by Asn-28, Leu-30, Gly-55, Glu-76, Asp-101, and Asn-125.

This sequence belongs to the class I-like SAM-binding methyltransferase superfamily. rRNA adenine N(6)-methyltransferase family. RsmA subfamily.

It localises to the cytoplasm. It catalyses the reaction adenosine(1518)/adenosine(1519) in 16S rRNA + 4 S-adenosyl-L-methionine = N(6)-dimethyladenosine(1518)/N(6)-dimethyladenosine(1519) in 16S rRNA + 4 S-adenosyl-L-homocysteine + 4 H(+). Specifically dimethylates two adjacent adenosines (A1518 and A1519) in the loop of a conserved hairpin near the 3'-end of 16S rRNA in the 30S particle. May play a critical role in biogenesis of 30S subunits. The chain is Ribosomal RNA small subunit methyltransferase A from Alkaliphilus oremlandii (strain OhILAs) (Clostridium oremlandii (strain OhILAs)).